A 643-amino-acid polypeptide reads, in one-letter code: MPIITLPDGSQRQFDRPVSVLEVAQDIGAGLAKATIAGRVNGERRDACDVIEQDATLEIITAKDEDGLEIIRHSCAHLLGHAIKQLFPDVKMAIGPTIENGFYYDVDLDRSLTQEDIDAIEKRMLELAKTNYDVVKKRVTWQEARDTFEKRGEPYKMAILDENIERTATPALYHHLEYIDMCRGPHVPNMRFCQHFKLQKVAGAYWRGDSKNKMLQRIYGTAWADKKQLAEYLTRLEEAAKRDHRKIGKALDLYHMQEEAPGMVFWHNDGWTIFRELETFVRTKLKQYDYQEVKGPFMMDRVLWEKTGHWQNYADLMFTTQSENREYAIKPMNCPGHVQIFNQGLKSYRDLPIRMAEFGSCHRNEPSGSLHGLMRVRGFTQDDAHIFCTEDQIESEVTSCIKMVYDIYSTFGFTNIAVKLSTRPENRIGSDEMWDRAEAGLAAALAHNGLEYEIQEGEGAFYGPKIEFALRDCLGREWQCGTVQLDFALPGRLDATYVAEDNSRKTPVMIHRAILGSIERFIGIITEEYAGFFPAWLAPTQAVVMNITDSQADYVQQVVKTLSDAGLRVKADLRNEKVGFKIREHTLRRVPYMLVCGDKEIAEGKVAVRTRKGADLGTFTVEEFAEILKNQVRSRELKLLNEE.

The TGS domain maps to 1–61 (MPIITLPDGS…EQDATLEIIT (61 aa)). Positions 243–534 (DHRKIGKALD…ITEEYAGFFP (292 aa)) are catalytic. The Zn(2+) site is built by cysteine 334, histidine 385, and histidine 511.

The protein belongs to the class-II aminoacyl-tRNA synthetase family. In terms of assembly, homodimer. The cofactor is Zn(2+).

It localises to the cytoplasm. It catalyses the reaction tRNA(Thr) + L-threonine + ATP = L-threonyl-tRNA(Thr) + AMP + diphosphate + H(+). Its function is as follows. Catalyzes the attachment of threonine to tRNA(Thr) in a two-step reaction: L-threonine is first activated by ATP to form Thr-AMP and then transferred to the acceptor end of tRNA(Thr). Also edits incorrectly charged L-seryl-tRNA(Thr). This Haemophilus influenzae (strain 86-028NP) protein is Threonine--tRNA ligase.